We begin with the raw amino-acid sequence, 61 residues long: Large ribosomal subunit protein bL32 (61 aa).

Over residues 1-19 (MAHPKRRQSKTRTAKRRTH) the composition is skewed to basic residues. Residues 1–20 (MAHPKRRQSKTRTAKRRTHD) are disordered.

Belongs to the bacterial ribosomal protein bL32 family.

The chain is Large ribosomal subunit protein bL32 from Porphyromonas gingivalis (strain ATCC 33277 / DSM 20709 / CIP 103683 / JCM 12257 / NCTC 11834 / 2561).